The primary structure comprises 563 residues: uncharacterized protein (563 aa).

The Cytoplasmic portion of the chain corresponds to 1 to 13 (MASRSCICQVSAG). A helical membrane pass occupies residues 14-34 (IIFLIGAALLVAGLVIVLNVF). Topologically, residues 35-528 (PNIVNNQIND…LFTPVSTVNT (494 aa)) are lumenal. 8 N-linked (GlcNAc...) asparagine glycosylation sites follow: N43, N112, N133, N188, N265, N295, N315, and N502. A helical membrane pass occupies residues 529 to 549 (ICWIAVGLGAGLIALSIVMVI). Over 550-563 (VSFCCFRDEHHKTS) the chain is Cytoplasmic.

The protein belongs to the CD36 family.

The protein localises to the membrane. This is an uncharacterized protein from Caenorhabditis elegans.